We begin with the raw amino-acid sequence, 1480 residues long: Cystic fibrosis transmembrane conductance regulator (1480 aa).

The Cytoplasmic portion of the chain corresponds to 1-77 (MQRSPLEKAS…KLINALRRCF (77 aa)). A helical transmembrane segment spans residues 78–98 (FWRFMFYGILLYLGEVTKAVQ). The ABC transmembrane type-1 1 domain occupies 81–365 (FMFYGILLYL…WAVQTWYDSL (285 aa)). Residues 99–122 (PLLLGRIIASYDPDNKTERSIAIY) are Extracellular-facing. A helical transmembrane segment spans residues 123–146 (LGIGLCLLFIVRTLLLHPAIFGLH). Residues 147-195 (HIGMQMRIAMFSLIYKKTLKLSSRVLDKISIGQLVSLLSNNLNKFDEGL) are Cytoplasmic-facing. Residues 196-216 (ALAHFVWIAPLQVALLMGLIW) traverse the membrane as a helical segment. Residues 217–222 (ELLQAS) lie on the Extracellular side of the membrane. A helical membrane pass occupies residues 223 to 243 (VFCGLGFLIVLALFQAGLGRM). Residues 244–298 (MMKYRDQRAGKINERLVITSEMIENIQSVKAYCWEEAMEKMIENLRQTELKLTRK) are Cytoplasmic-facing. A helical transmembrane segment spans residues 299–319 (AAYVRYFNSSAFFFSGFFVVF). Topologically, residues 320–339 (LSVLPYALIKGIILRKIFTT) are extracellular. A helical transmembrane segment spans residues 340–358 (ISFCIVLRMAVTRQFPWAV). Topologically, residues 359–858 (QTWYDSLGAI…YLRYITLHKS (500 aa)) are cytoplasmic. Residues Trp-401, Ser-434, 458–465 (GSTGAGKT), and Gln-493 each bind ATP. Residues 423–646 (NGHDNLFFSN…RPDFSSKLMG (224 aa)) form the ABC transporter 1 domain. A lipid anchor (S-palmitoyl cysteine) is attached at Cys-524. Residues Ser-549 and Ser-660 each carry the phosphoserine modification. Residues 654-831 (SSERRNSILT…EEINEEDLKE (178 aa)) are disordered R region. Ser-670 bears the Phosphoserine; by PKA mark. Phosphoserine is present on Ser-686. A Glycyl lysine isopeptide (Lys-Gly) (interchain with G-Cter in ubiquitin) cross-link involves residue Lys-688. A phosphoserine mark is found at Ser-700 and Ser-712. Thr-717 is modified (phosphothreonine). Ser-737, Ser-753, Ser-768, Ser-790, Ser-795, and Ser-813 each carry phosphoserine. Residues 859–879 (LIFVLIWCLVIFLAEVAASLV) traverse the membrane as a helical segment. In terms of domain architecture, ABC transmembrane type-1 2 spans 859–1155 (LIFVLIWCLV…AVNSSIDVDS (297 aa)). Topologically, residues 880–918 (VLWLLGNTSFQDKGNSTYSRNNSYAVIITNTSSYYVFYI) are extracellular. 3 N-linked (GlcNAc...) asparagine glycosylation sites follow: Asn-894, Asn-900, and Asn-909. The chain crosses the membrane as a discontinuously helical span at residues 919-939 (YVGVADTLLALGFFRGLPLVH). Residues 940–990 (TLITVSKILHHKMLHSVLQAPMSTLNTLKAGGILNRFSKDIAILDDLLPLT) lie on the Cytoplasmic side of the membrane. Residues 991–1011 (IFDFIQLLLIVIGAIAVVSVL) form a helical membrane-spanning segment. Residues 1012 to 1013 (QP) are Extracellular-facing. The helical transmembrane segment at 1014-1034 (YIFLATVPVIAAFILLRAYFL) threads the bilayer. At 1035–1095 (QTSQQLKQLE…TANWFLYLST (61 aa)) the chain is on the cytoplasmic side. A helical transmembrane segment spans residues 1096–1116 (LRWFQMRIEMIFVIFFIAVTF). The Extracellular segment spans residues 1117–1130 (ISILTTGEGEGTVG). A helical transmembrane segment spans residues 1131 to 1151 (IILTLAMNIMSTLQWAVNSSI). Residues 1152–1480 (DVDSLMRSVS…TEEEVQETRL (329 aa)) lie on the Cytoplasmic side of the membrane. The ABC transporter 2 domain maps to 1210-1443 (MTIKDLTAKY…KSLFQQAISH (234 aa)). Residues Tyr-1219 and 1244-1251 (GRTGSGKS) each bind ATP. The tract at residues 1386–1480 (RALKQAFADC…TEEEVQETRL (95 aa)) is interaction with GORASP2. Residue Cys-1395 is the site of S-palmitoyl cysteine attachment. Phosphoserine is present on residues Ser-1444 and Ser-1456. The disordered stretch occupies residues 1452 to 1480 (HRNSSKYKSRPQIASLKEETEEEVQETRL). Residues 1470-1480 (ETEEEVQETRL) are compositionally biased toward acidic residues. Positions 1478 to 1480 (TRL) match the PDZ-binding motif.

The protein belongs to the ABC transporter superfamily. ABCC family. CFTR transporter (TC 3.A.1.202) subfamily. Monomer; does not require oligomerization for channel activity. May form oligomers in the membrane. Interacts with SLC26A3, SLC26A6 and NHERF1. Interacts with SHANK2. Interacts with MYO6. Interacts (via C-terminus) with GOPC (via PDZ domain); this promotes CFTR internalization and thereby decreases channel activity. Interacts with SLC4A7 through NHERF1. Found in a complex with MYO5B and RAB11A. Interacts with ANO1. Interacts with SLC26A8. Interacts with AHCYL1; the interaction increases CFTR activity. Interacts with CSE1L. The core-glycosylated form interacts with GORASP2 (via PDZ GRASP-type 1 domain) in respone to ER stress. Interacts with MARCHF2; the interaction leads to CFTR ubiqtuitination and degradation. Interacts with ADGRG2. N-glycosylated. In terms of processing, phosphorylated; cAMP treatment promotes phosphorylation and activates the channel. Dephosphorylation decreases the ATPase activity (in vitro). Phosphorylation at PKA sites activates the channel. Phosphorylation at PKC sites enhances the response to phosphorylation by PKA. Phosphorylated by AMPK; this inhibits channel activity. Post-translationally, ubiquitinated, leading to its degradation in the lysosome. Deubiquitination by USP10 in early endosomes enhances its endocytic recycling to the cell membrane. Ubiquitinated by RNF185 during ER stress. Ubiquitinated by MARCHF2.

It is found in the apical cell membrane. The protein localises to the early endosome membrane. Its subcellular location is the cell membrane. The protein resides in the recycling endosome membrane. It localises to the endoplasmic reticulum membrane. It is found in the nucleus. The enzyme catalyses ATP + H2O + closed Cl(-) channel = ADP + phosphate + open Cl(-) channel.. It carries out the reaction chloride(in) = chloride(out). It catalyses the reaction hydrogencarbonate(in) = hydrogencarbonate(out). The catalysed reaction is ATP + H2O = ADP + phosphate + H(+). Epithelial ion channel that plays an important role in the regulation of epithelial ion and water transport and fluid homeostasis. Mediates the transport of chloride ions across the cell membrane. Possesses an intrinsic ATPase activity and utilizes ATP to gate its channel; the passive flow of anions through the channel is gated by cycles of ATP binding and hydrolysis by the ATP-binding domains. The ion channel is also permeable to HCO(3)(-); selectivity depends on the extracellular chloride concentration. Exerts its function also by modulating the activity of other ion channels and transporters. Contributes to the regulation of the pH and the ion content of the epithelial fluid layer. Modulates the activity of the epithelial sodium channel (ENaC) complex, in part by regulating the cell surface expression of the ENaC complex. May regulate bicarbonate secretion and salvage in epithelial cells by regulating the transporter SLC4A7. Can inhibit the chloride channel activity of ANO1. Plays a role in the chloride and bicarbonate homeostasis during sperm epididymal maturation and capacitation. This chain is Cystic fibrosis transmembrane conductance regulator, found in Plecturocebus moloch (Dusky titi monkey).